Consider the following 180-residue polypeptide: ATP synthase subunit delta (180 aa).

The protein belongs to the ATPase delta chain family. In terms of assembly, F-type ATPases have 2 components, F(1) - the catalytic core - and F(0) - the membrane proton channel. F(1) has five subunits: alpha(3), beta(3), gamma(1), delta(1), epsilon(1). F(0) has three main subunits: a(1), b(2) and c(10-14). The alpha and beta chains form an alternating ring which encloses part of the gamma chain. F(1) is attached to F(0) by a central stalk formed by the gamma and epsilon chains, while a peripheral stalk is formed by the delta and b chains.

Its subcellular location is the cell inner membrane. In terms of biological role, f(1)F(0) ATP synthase produces ATP from ADP in the presence of a proton or sodium gradient. F-type ATPases consist of two structural domains, F(1) containing the extramembraneous catalytic core and F(0) containing the membrane proton channel, linked together by a central stalk and a peripheral stalk. During catalysis, ATP synthesis in the catalytic domain of F(1) is coupled via a rotary mechanism of the central stalk subunits to proton translocation. Its function is as follows. This protein is part of the stalk that links CF(0) to CF(1). It either transmits conformational changes from CF(0) to CF(1) or is implicated in proton conduction. The sequence is that of ATP synthase subunit delta from Geobacter metallireducens (strain ATCC 53774 / DSM 7210 / GS-15).